Here is a 639-residue protein sequence, read N- to C-terminus: Sec1 family domain-containing protein 1 (639 aa).

Phosphoserine occurs at positions 34, 300, and 525.

This sequence belongs to the STXBP/unc-18/SEC1 family. Interacts with STX17. Interacts with STX5A. Interacts with the COG complex via COG4.

Its subcellular location is the cytoplasm. The protein localises to the endoplasmic reticulum membrane. The protein resides in the golgi apparatus. It is found in the golgi stack membrane. Plays a role in SNARE-pin assembly and Golgi-to-ER retrograde transport via its interaction with COG4. Involved in vesicular transport between the endoplasmic reticulum and the Golgi. This is Sec1 family domain-containing protein 1 (Scfd1) from Mus musculus (Mouse).